The sequence spans 517 residues: Apolipoprotein N-acyltransferase (517 aa).

7 helical membrane passes run Ser-5–Thr-25, Phe-26–Leu-46, Gly-55–Val-75, Phe-90–Phe-110, Val-128–Trp-148, Ala-162–Val-182, and Leu-193–Val-213. The CN hydrolase domain maps to Ile-225–Pro-471. The active-site Proton acceptor is Glu-264. Residue Lys-330 is part of the active site. The active-site Nucleophile is the Cys-382.

Belongs to the CN hydrolase family. Apolipoprotein N-acyltransferase subfamily.

It localises to the cell inner membrane. It catalyses the reaction N-terminal S-1,2-diacyl-sn-glyceryl-L-cysteinyl-[lipoprotein] + a glycerophospholipid = N-acyl-S-1,2-diacyl-sn-glyceryl-L-cysteinyl-[lipoprotein] + a 2-acyl-sn-glycero-3-phospholipid + H(+). Its pathway is protein modification; lipoprotein biosynthesis (N-acyl transfer). Functionally, catalyzes the phospholipid dependent N-acylation of the N-terminal cysteine of apolipoprotein, the last step in lipoprotein maturation. This chain is Apolipoprotein N-acyltransferase, found in Photobacterium profundum (strain SS9).